The following is a 304-amino-acid chain: MRLPIFLDTDPGIDDAVAIAAAIFAPELDLQLMTTVAGNVSVEKTTRNALQLLHFWNAEIPLAQGAAVPLVRAPRDAASVHGESGMAGYDFVEHNRKPLGIPAFLAIRDALMRAPEPVTLVAIGPLTNIALLLSQCPECKPYIRRLVIMGGSAGRGNCTPNAEFNIAVDPEAAACVFRSGIEIVMCGLDVTNQAILTPDYLATLPELNRTGKMLHALFSHYRSGSMQSGLRMHDLCAIAWLVRPELFTLKPCFVAVETQGEFTSGTTVVDIDGCLDKPANVQVALELDVKGFQQWVAEVLALAS.

Histidine 233 is a catalytic residue.

Belongs to the IUNH family. RihC subfamily.

Functionally, hydrolyzes both purine and pyrimidine ribonucleosides with a broad-substrate specificity. This chain is Non-specific ribonucleoside hydrolase RihC, found in Escherichia coli O7:K1 (strain IAI39 / ExPEC).